Consider the following 210-residue polypeptide: Fibroblast growth factor 8 (210 aa).

The N-terminal stretch at 1–27 (MRLIPSRLSYLFLHLFAFCYYAQVTIQ) is a signal peptide.

It belongs to the heparin-binding growth factors family. As to quaternary structure, monomer. Homodimer.

The protein resides in the secreted. In terms of biological role, plays an important role in the regulation of embryonic development, cell proliferation, cell differentiation and cell migration. Required for Kupffer's vesicle ciliogenesis. The protein is Fibroblast growth factor 8 of Danio rerio (Zebrafish).